A 142-amino-acid chain; its full sequence is RNA polymerase-binding transcription factor DksA (142 aa).

Disordered stretches follow at residues 1–20 (MQTA…EDEP), 51–70 (HLQK…SSET), and 119–142 (RPTA…HRDD). A dksA C4-type zinc finger spans residues 104–128 (CEETGEPIGLARLEARPTATMSVEA). Basic and acidic residues predominate over residues 128 to 142 (AQERHERRERVHRDD).

This sequence belongs to the DksA family. Interacts directly with the RNA polymerase.

The protein localises to the cytoplasm. Functionally, transcription factor that acts by binding directly to the RNA polymerase (RNAP). Required for negative regulation of rRNA expression and positive regulation of several amino acid biosynthesis promoters. The sequence is that of RNA polymerase-binding transcription factor DksA from Caulobacter vibrioides (strain ATCC 19089 / CIP 103742 / CB 15) (Caulobacter crescentus).